The following is a 575-amino-acid chain: Septation ring formation regulator EzrA (575 aa).

Residues 1-8 lie on the Extracellular side of the membrane; that stretch reads MSNGQLIY. A helical membrane pass occupies residues 9 to 27; the sequence is LMVAIAVILVLAYVVAIFL. Topologically, residues 28–575 are cytoplasmic; that stretch reads RKRNEGRLEA…YEKTRETIRF (548 aa). 4 coiled-coil regions span residues 105–191, 265–301, 354–416, and 456–526; these read LKAS…FVTL, LYEAFKKNQENIRQLELDNAEYENGQAQEEINALYDI, VRRI…IEKD, and TASN…IQEA.

This sequence belongs to the EzrA family.

It is found in the cell membrane. Functionally, negative regulator of FtsZ ring formation; modulates the frequency and position of FtsZ ring formation. Inhibits FtsZ ring formation at polar sites. Interacts either with FtsZ or with one of its binding partners to promote depolymerization. The sequence is that of Septation ring formation regulator EzrA from Streptococcus pneumoniae serotype 4 (strain ATCC BAA-334 / TIGR4).